The chain runs to 196 residues: Large ribosomal subunit protein uL18 (196 aa).

The protein belongs to the universal ribosomal protein uL18 family. In terms of assembly, part of the 50S ribosomal subunit. Contacts the 5S and 23S rRNAs.

This is one of the proteins that bind and probably mediate the attachment of the 5S RNA into the large ribosomal subunit, where it forms part of the central protuberance. The polypeptide is Large ribosomal subunit protein uL18 (Desulfurococcus amylolyticus (strain DSM 18924 / JCM 16383 / VKM B-2413 / 1221n) (Desulfurococcus kamchatkensis)).